The following is a 277-amino-acid chain: Large ribosomal subunit protein mL46 (277 aa).

Lys217 is subject to N6-succinyllysine. An N6-acetyllysine modification is found at Lys228. Lys246 is subject to N6-succinyllysine.

The protein belongs to the mitochondrion-specific ribosomal protein mL46 family. In terms of assembly, component of the mitochondrial ribosome large subunit (39S) which comprises a 16S rRNA and about 50 distinct proteins.

Its subcellular location is the mitochondrion. The sequence is that of Large ribosomal subunit protein mL46 (Mrpl46) from Rattus norvegicus (Rat).